A 433-amino-acid polypeptide reads, in one-letter code: B3 domain-containing protein Os04g0676600 (433 aa).

Disordered stretches follow at residues 1-29 and 216-283; these read MADTRGSTSSGGGDDRGREGHDDFTGGGQ and FPPV…NSAN. Basic and acidic residues predominate over residues 13–24; that stretch reads GDDRGREGHDDF. Low complexity predominate over residues 216–229; it reads FPPVSSSSRSFSSA. The segment covering 237–265 has biased composition (basic and acidic residues); sequence DAKKAKKSDIKDQPIVLRRSDTESEKNDE. A compositionally biased stretch (polar residues) spans 269 to 283; the sequence is TPASEPSSMSHNSAN. Positions 297-399 form a DNA-binding region, TF-B3; sequence LRKELTNSDV…KLVVRGEKAI (103 aa).

It is found in the nucleus. Its function is as follows. Probable transcription regulator that binds specifically to the DNA sequence 5'-CATGC-3' of the IDE1 element found in the promoter of the barley iron deficiency-inducible gene IDS2. This chain is B3 domain-containing protein Os04g0676600, found in Oryza sativa subsp. japonica (Rice).